Reading from the N-terminus, the 1405-residue chain is DNA-directed RNA polymerase subunit beta' (1405 aa).

Cysteine 71, cysteine 73, cysteine 86, and cysteine 89 together coordinate Zn(2+). 3 residues coordinate Mg(2+): aspartate 462, aspartate 464, and aspartate 466. Residues cysteine 810, cysteine 884, cysteine 891, and cysteine 894 each coordinate Zn(2+).

The protein belongs to the RNA polymerase beta' chain family. As to quaternary structure, the RNAP catalytic core consists of 2 alpha, 1 beta, 1 beta' and 1 omega subunit. When a sigma factor is associated with the core the holoenzyme is formed, which can initiate transcription. Mg(2+) is required as a cofactor. Requires Zn(2+) as cofactor.

The enzyme catalyses RNA(n) + a ribonucleoside 5'-triphosphate = RNA(n+1) + diphosphate. Functionally, DNA-dependent RNA polymerase catalyzes the transcription of DNA into RNA using the four ribonucleoside triphosphates as substrates. The chain is DNA-directed RNA polymerase subunit beta' from Maricaulis maris (strain MCS10) (Caulobacter maris).